A 211-amino-acid polypeptide reads, in one-letter code: Guanylate kinase (211 aa).

The 180-residue stretch at 5 to 184 folds into the Guanylate kinase-like domain; that stretch reads GLLIVFSGPS…AAERVKRIIE (180 aa). Residue 12–19 participates in ATP binding; that stretch reads GPSGVGKG.

The protein belongs to the guanylate kinase family.

It is found in the cytoplasm. It catalyses the reaction GMP + ATP = GDP + ADP. Functionally, essential for recycling GMP and indirectly, cGMP. The polypeptide is Guanylate kinase (Streptococcus pyogenes serotype M1).